The following is a 384-amino-acid chain: 8-amino-7-oxononanoate synthase (384 aa).

R21 serves as a coordination point for substrate. 108-109 (GF) is a pyridoxal 5'-phosphate binding site. H133 lines the substrate pocket. The pyridoxal 5'-phosphate site is built by S179, H207, and T233. Residue K236 is modified to N6-(pyridoxal phosphate)lysine. T352 serves as a coordination point for substrate.

Belongs to the class-II pyridoxal-phosphate-dependent aminotransferase family. BioF subfamily. Homodimer. The cofactor is pyridoxal 5'-phosphate.

It carries out the reaction 6-carboxyhexanoyl-[ACP] + L-alanine + H(+) = (8S)-8-amino-7-oxononanoate + holo-[ACP] + CO2. The protein operates within cofactor biosynthesis; biotin biosynthesis. Catalyzes the decarboxylative condensation of pimeloyl-[acyl-carrier protein] and L-alanine to produce 8-amino-7-oxononanoate (AON), [acyl-carrier protein], and carbon dioxide. This chain is 8-amino-7-oxononanoate synthase, found in Escherichia fergusonii (strain ATCC 35469 / DSM 13698 / CCUG 18766 / IAM 14443 / JCM 21226 / LMG 7866 / NBRC 102419 / NCTC 12128 / CDC 0568-73).